Consider the following 63-residue polypeptide: Short neurotoxin 2 (63 aa).

4 disulfides stabilise this stretch: Cys-3-Cys-21, Cys-15-Cys-39, Cys-43-Cys-49, and Cys-50-Cys-55.

This sequence belongs to the three-finger toxin family. Short-chain subfamily. Orphan group XVIII sub-subfamily. In terms of tissue distribution, expressed by the venom gland.

Its subcellular location is the secreted. In terms of biological role, blocks both the muscle-twitch response to nerve stimulation and the response to exogenous acetylcholine. The chain is Short neurotoxin 2 from Bungarus fasciatus (Banded krait).